The chain runs to 358 residues: Protein RecA (358 aa).

Residue 78-85 (GPESGGKT) coordinates ATP.

This sequence belongs to the RecA family.

The protein localises to the cytoplasm. Functionally, can catalyze the hydrolysis of ATP in the presence of single-stranded DNA, the ATP-dependent uptake of single-stranded DNA by duplex DNA, and the ATP-dependent hybridization of homologous single-stranded DNAs. It interacts with LexA causing its activation and leading to its autocatalytic cleavage. This chain is Protein RecA, found in Deinococcus geothermalis (strain DSM 11300 / CIP 105573 / AG-3a).